The chain runs to 239 residues: Ribonuclease PH (239 aa).

Residues Arg86 and 124 to 126 (GTR) each bind phosphate.

This sequence belongs to the RNase PH family. In terms of assembly, homohexameric ring arranged as a trimer of dimers.

It carries out the reaction tRNA(n+1) + phosphate = tRNA(n) + a ribonucleoside 5'-diphosphate. In terms of biological role, phosphorolytic 3'-5' exoribonuclease that plays an important role in tRNA 3'-end maturation. Removes nucleotide residues following the 3'-CCA terminus of tRNAs; can also add nucleotides to the ends of RNA molecules by using nucleoside diphosphates as substrates, but this may not be physiologically important. Probably plays a role in initiation of 16S rRNA degradation (leading to ribosome degradation) during starvation. This chain is Ribonuclease PH, found in Anaeromyxobacter dehalogenans (strain 2CP-C).